Consider the following 1071-residue polypeptide: Fused isobutyryl-CoA mutase (1071 aa).

The region spanning 12–149 (PVRFVTSAAL…QTCDVDLTGE (138 aa)) is the B12-binding domain. Position 25 (His25) interacts with adenosylcob(III)alamin. A GTPase chaperone MeaI region spans residues 153-400 (VEAVLAGERT…YQHLLELLGA (248 aa)). 203–208 (GSGKSS) contacts GTP. 4 residues coordinate Mg(2+): Ser207, Val232, Asp233, and Asp246. Arg249 contributes to the GTP binding site. Residues Glu293 and Thr294 each coordinate Mg(2+). Residue 340–343 (NKFE) participates in GTP binding. The tract at residues 401–558 (RGLPVDEGVL…RSENLPGHFP (158 aa)) is linker. Substrate is bound by residues Phe566, Arg601, Arg707, Tyr751, Ser800, Arg835, and Lys840. Positions 952 and 1070 each coordinate GTP.

This sequence belongs to the IcmF family. In terms of assembly, homodimer. The cofactor is adenosylcob(III)alamin. It depends on Mg(2+) as a cofactor.

It catalyses the reaction 2-methylpropanoyl-CoA = butanoyl-CoA. The catalysed reaction is GTP + H2O = GDP + phosphate + H(+). Catalyzes the reversible interconversion of isobutyryl-CoA and n-butyryl-CoA, using radical chemistry. Also exhibits GTPase activity, associated with its G-protein domain (MeaI) that functions as a chaperone that assists cofactor delivery and proper holo-enzyme assembly. Does not exhibit methylmalonyl-CoA mutase (MCM) activity. In Nocardia farcinica (strain IFM 10152), this protein is Fused isobutyryl-CoA mutase.